We begin with the raw amino-acid sequence, 366 residues long: UDP-N-acetylenolpyruvoylglucosamine reductase (366 aa).

Residues 27 to 197 (LGGPAAGFVV…LRVRFLLRDG (171 aa)) form the FAD-binding PCMH-type domain. The active site involves Arg175. Ser252 acts as the Proton donor in catalysis. Glu358 is an active-site residue.

This sequence belongs to the MurB family. Requires FAD as cofactor.

It is found in the cytoplasm. It carries out the reaction UDP-N-acetyl-alpha-D-muramate + NADP(+) = UDP-N-acetyl-3-O-(1-carboxyvinyl)-alpha-D-glucosamine + NADPH + H(+). Its pathway is cell wall biogenesis; peptidoglycan biosynthesis. Its function is as follows. Cell wall formation. This chain is UDP-N-acetylenolpyruvoylglucosamine reductase, found in Saccharopolyspora erythraea (strain ATCC 11635 / DSM 40517 / JCM 4748 / NBRC 13426 / NCIMB 8594 / NRRL 2338).